A 251-amino-acid polypeptide reads, in one-letter code: Imidazole glycerol phosphate synthase subunit HisF (251 aa).

Active-site residues include aspartate 11 and aspartate 130.

Belongs to the HisA/HisF family. As to quaternary structure, heterodimer of HisH and HisF.

Its subcellular location is the cytoplasm. The enzyme catalyses 5-[(5-phospho-1-deoxy-D-ribulos-1-ylimino)methylamino]-1-(5-phospho-beta-D-ribosyl)imidazole-4-carboxamide + L-glutamine = D-erythro-1-(imidazol-4-yl)glycerol 3-phosphate + 5-amino-1-(5-phospho-beta-D-ribosyl)imidazole-4-carboxamide + L-glutamate + H(+). Its pathway is amino-acid biosynthesis; L-histidine biosynthesis; L-histidine from 5-phospho-alpha-D-ribose 1-diphosphate: step 5/9. Its function is as follows. IGPS catalyzes the conversion of PRFAR and glutamine to IGP, AICAR and glutamate. The HisF subunit catalyzes the cyclization activity that produces IGP and AICAR from PRFAR using the ammonia provided by the HisH subunit. This is Imidazole glycerol phosphate synthase subunit HisF from Pelagibacter ubique (strain HTCC1062).